Here is a 143-residue protein sequence, read N- to C-terminus: Small ribosomal subunit protein uS12 (143 aa).

Residues 1–20 show a composition bias toward basic residues; that stretch reads MGKCRGLRTARKLRSHRRDH. The tract at residues 1 to 26 is disordered; that stretch reads MGKCRGLRTARKLRSHRRDHKWHDKQ. Lys37 participates in a covalent cross-link: Glycyl lysine isopeptide (Lys-Gly) (interchain with G-Cter in SUMO2). Lys54 is modified (N6-succinyllysine). Pro62 is subject to 3-hydroxyproline. Lys135 is modified (N6-acetyllysine).

The protein belongs to the universal ribosomal protein uS12 family. Component of the 40S small ribosomal subunit. Part of the small subunit (SSU) processome, composed of more than 70 proteins and the RNA chaperone small nucleolar RNA (snoRNA) U3. As to quaternary structure, (Microbial infection) Interacts with the African swine fever virus (ASFV) ubiquitin-conjugating enzyme UBCv1; this interaction probably plays a role in the viral regulation of host protein synthesis. Hydroxylation at Pro-62 affects translation termination efficiency.

The protein localises to the cytoplasm. The protein resides in the cytosol. It is found in the rough endoplasmic reticulum. Its subcellular location is the nucleus. It localises to the nucleolus. Functionally, component of the ribosome, a large ribonucleoprotein complex responsible for the synthesis of proteins in the cell. The small ribosomal subunit (SSU) binds messenger RNAs (mRNAs) and translates the encoded message by selecting cognate aminoacyl-transfer RNA (tRNA) molecules. The large subunit (LSU) contains the ribosomal catalytic site termed the peptidyl transferase center (PTC), which catalyzes the formation of peptide bonds, thereby polymerizing the amino acids delivered by tRNAs into a polypeptide chain. The nascent polypeptides leave the ribosome through a tunnel in the LSU and interact with protein factors that function in enzymatic processing, targeting, and the membrane insertion of nascent chains at the exit of the ribosomal tunnel. Plays an important role in translational accuracy. Part of the small subunit (SSU) processome, first precursor of the small eukaryotic ribosomal subunit. During the assembly of the SSU processome in the nucleolus, many ribosome biogenesis factors, an RNA chaperone and ribosomal proteins associate with the nascent pre-rRNA and work in concert to generate RNA folding, modifications, rearrangements and cleavage as well as targeted degradation of pre-ribosomal RNA by the RNA exosome. This is Small ribosomal subunit protein uS12 (RPS23) from Sus scrofa (Pig).